A 699-amino-acid polypeptide reads, in one-letter code: MPAFFCLPMACQRQVDSIDRSQSNLQAIPSDIFRFRKLEDLNLTMNNIKELDHRLFSLRHLRILDVSDNELAVLPAEIGNLTQLIELNLNRNSIAKLPDTMQNCKLLTTLNLSSNPFTRLPETICECSSITILSLNETSLTLLPSNIGSLTNLRVLEARDNLLRTIPLSIVELRKLEELDLGQNELEALPAEIGKLTSLREFYVDINSLTSLPDSISGCRMLDQLDVSENQIIRLPENLGRMPNLTDLNISINEIIELPSSFGELKRLQMLKADRNSLHNLTSEIGKCQSLTELYLGQNFLTDLPDTIGDLRQLTTLNVDCNNLSDIPDTIGNCKSLTVLSLRQNILTELPMTIGKCENLTVLDVASNKLPHLPFTVKVLYKLQALWLSENQTQSILKLSETRDDRKGIKVVTCYLLPQVDAIDGEGRSGSAQHNTDRGAFLGGPKVHFHDQADTTFEENKEAEIHLGNFERHNTPHPKTPKHKKGSIDGHMLPHEIDQPRQLSLVSNHRTSTSSFGESSNSINRDLADIRAQNGVREATLSPEREERMATSLSSLSNLAAGTQNMHTIRIQKDDTGKLGLSFAGGTSNDPAPNSNGDSGLFVTKVTPGSAAYRCGLREGDKLIRANDVNMINASQDNAMEAIKKRETVELVVLRRSPSPVSRTSEPSLNGSSHQLNHFDAGSPDSTMFVTSSTPVYAS.

LRR repeat units follow at residues 37–59 (KLED…FSLR), 60–81 (HLRI…IGNL), 83–104 (QLIE…MQNC), 106–127 (LLTT…ICEC), 129–150 (SITI…IGSL), 152–174 (NLRV…VELR), 175–196 (KLEE…IGKL), 198–219 (SLRE…ISGC), 221–242 (MLDQ…LGRM), 244–265 (NLTD…FGEL), 267–288 (RLQM…IGKC), 290–311 (SLTE…IGDL), 313–334 (QLTT…IGNC), 336–357 (SLTV…IGKC), 359–380 (NLTV…VKVL), and 382–403 (KLQA…SETR). In terms of domain architecture, PDZ spans 584-665 (AGGTSNDPAP…RSPSPVSRTS (82 aa)). The tract at residues 656–699 (RSPSPVSRTSEPSLNGSSHQLNHFDAGSPDSTMFVTSSTPVYAS) is disordered. Polar residues-rich tracts occupy residues 659 to 676 (SPVS…SHQL) and 684 to 699 (PDST…VYAS).

The protein belongs to the LAP (LRR and PDZ) protein family. Expressed in the terminal web of the intestine. Expressed in seam cells. Expressed in the basolateral surfaces of epithelia and the nervous system. Expressed in the intestine, epidermis, excretory canal, reproductive system including vulva, uterus and spermatheca, in both larval and adult stage animals.

It localises to the basolateral cell membrane. Functionally, critical role in assembling adherens junctions; adapter protein involved in polarizing protein trafficking in epithelial cells. Necessary to maintain, not establish, the entire terminal web (organelle-depleted, intermediate filament-rich layer of cytoplasm that underlies the apical microvilli of polarized epithelial cells) or brush border assembly at the apical surface gut cells. Required for correct localization of ifb-2 intermediate filaments in the terminal web. Required for dlg-1 and hmr-1 lateral localization. Maintains cell polarity by correctly positioning adherens junction protein components including ajm-1 and hmp-1 at discrete subapical positions. Plays a role in the correct localization of the dlg-1-ajm-1 complex, polarity protein par-3, and actin microfilament to the apical junction of spermatheca cells, and is required for ovulation. Regulates the establishment of newly-formed epithelia in conjunction with dlg-1. Required in the epidermis during larval development. Plays a role in cellular junction integrity and in the directed outgrowth of seam cells, towards neighboring seam cells, during larval development; probably acts by promoting the assembly and stability of dlg-1 at apical junctions. The protein is Protein Scribble homolog let-413 of Caenorhabditis elegans.